Reading from the N-terminus, the 321-residue chain is uncharacterized protein (321 aa).

One can recognise an HTH lacI-type domain in the interval 1–56 (MANIKDIAEKAGVSVTTVSRVINNHPYVSEDKRKRVFEAMESLEYTRNIHAVHLSK). The segment at residues 4–23 (IKDIAEKAGVSVTTVSRVIN) is a DNA-binding region (H-T-H motif).

This is an uncharacterized protein from Bacillus subtilis (strain 168).